The sequence spans 173 residues: Probable WRKY transcription factor 50 (173 aa).

The segment at residues 107 to 172 (SEVEVLDDGF…YEGSHNHSSM (66 aa)) is a DNA-binding region (WRKY).

It belongs to the WRKY group II-c family.

The protein resides in the nucleus. In terms of biological role, transcription factor. Interacts specifically with the W box (5'-(T)TGAC[CT]-3'), a frequently occurring elicitor-responsive cis-acting element. The protein is Probable WRKY transcription factor 50 (WRKY50) of Arabidopsis thaliana (Mouse-ear cress).